The sequence spans 879 residues: Beta-mannosidase (879 aa).

The signal sequence occupies residues 1-19; sequence MHLHLLLILALFRAGCVVA. Residues Asn-35, Asn-77, Asn-89, and Asn-113 are each glycosylated (N-linked (GlcNAc...) asparagine). Residues Cys-167 and Cys-176 are joined by a disulfide bond. Residue 190–192 participates in substrate binding; sequence WDW. N-linked (GlcNAc...) asparagine glycosylation is found at Asn-226, Asn-297, and Asn-302. Residue Asn-456 participates in substrate binding. Glu-457 functions as the Proton donor in the catalytic mechanism. Intrachain disulfides connect Cys-540–Cys-629, Cys-732–Cys-761, and Cys-764–Cys-769. Glu-554 acts as the Nucleophile in catalysis. Asn-736 carries an N-linked (GlcNAc...) asparagine glycan. Asn-803 and Asn-807 each carry an N-linked (GlcNAc...) asparagine glycan.

Belongs to the glycosyl hydrolase 2 family. Monomer. In terms of tissue distribution, highest level in liver, high levels in lung, testis, skin and spleen, moderate level in thymus. Activity found in plasma, kidney, liver, spleen, pancreas, brain, testis, epididymis, heart, lung and skeletal muscle.

It is found in the lysosome. It catalyses the reaction Hydrolysis of terminal, non-reducing beta-D-mannose residues in beta-D-mannosides.. It functions in the pathway glycan metabolism; N-glycan degradation. Its function is as follows. Exoglycosidase that cleaves the single beta-linked mannose residue from the non-reducing end of all N-linked glycoprotein oligosaccharides. In Mus musculus (Mouse), this protein is Beta-mannosidase.